Here is a 121-residue protein sequence, read N- to C-terminus: Large ribosomal subunit protein bL12 (121 aa).

The protein belongs to the bacterial ribosomal protein bL12 family. In terms of assembly, homodimer. Part of the ribosomal stalk of the 50S ribosomal subunit. Forms a multimeric L10(L12)X complex, where L10 forms an elongated spine to which 2 to 4 L12 dimers bind in a sequential fashion. Binds GTP-bound translation factors.

In terms of biological role, forms part of the ribosomal stalk which helps the ribosome interact with GTP-bound translation factors. Is thus essential for accurate translation. The protein is Large ribosomal subunit protein bL12 of Oenococcus oeni (strain ATCC BAA-331 / PSU-1).